The following is a 227-amino-acid chain: Ribose-5-phosphate isomerase A (227 aa).

Residues 26–29, 82–85, and 95–98 contribute to the substrate site; these read TGST, DGAD, and KGGG. Residue glutamate 104 is the Proton acceptor of the active site. Lysine 122 serves as a coordination point for substrate.

This sequence belongs to the ribose 5-phosphate isomerase family. Homodimer.

It carries out the reaction aldehydo-D-ribose 5-phosphate = D-ribulose 5-phosphate. Its pathway is carbohydrate degradation; pentose phosphate pathway; D-ribose 5-phosphate from D-ribulose 5-phosphate (non-oxidative stage): step 1/1. Its function is as follows. Catalyzes the reversible conversion of ribose-5-phosphate to ribulose 5-phosphate. The chain is Ribose-5-phosphate isomerase A from Streptococcus equi subsp. zooepidemicus (strain H70).